We begin with the raw amino-acid sequence, 105 residues long: V-type ATP synthase subunit F (105 aa).

Belongs to the V-ATPase F subunit family.

Functionally, produces ATP from ADP in the presence of a proton gradient across the membrane. This Clostridium perfringens (strain 13 / Type A) protein is V-type ATP synthase subunit F.